The sequence spans 306 residues: Tyrosine recombinase XerC (306 aa).

One can recognise a Core-binding (CB) domain in the interval 6 to 92 (NTLYLQTKPY…ALRQWFSYLI (87 aa)). Residues 113–292 (RLPKNIDAEQ…DFQHLAKIYD (180 aa)) enclose the Tyr recombinase domain. Residues arginine 152, lysine 176, histidine 244, arginine 247, and histidine 270 contribute to the active site. Catalysis depends on tyrosine 279, which acts as the O-(3'-phospho-DNA)-tyrosine intermediate.

This sequence belongs to the 'phage' integrase family. XerC subfamily. In terms of assembly, forms a cyclic heterotetrameric complex composed of two molecules of XerC and two molecules of XerD.

The protein localises to the cytoplasm. Site-specific tyrosine recombinase, which acts by catalyzing the cutting and rejoining of the recombining DNA molecules. The XerC-XerD complex is essential to convert dimers of the bacterial chromosome into monomers to permit their segregation at cell division. It also contributes to the segregational stability of plasmids. The sequence is that of Tyrosine recombinase XerC from Actinobacillus pleuropneumoniae serotype 7 (strain AP76).